A 90-amino-acid polypeptide reads, in one-letter code: Small ribosomal subunit protein uS15 (90 aa).

This sequence belongs to the universal ribosomal protein uS15 family. In terms of assembly, part of the 30S ribosomal subunit. Forms a bridge to the 50S subunit in the 70S ribosome, contacting the 23S rRNA.

Its function is as follows. One of the primary rRNA binding proteins, it binds directly to 16S rRNA where it helps nucleate assembly of the platform of the 30S subunit by binding and bridging several RNA helices of the 16S rRNA. Functionally, forms an intersubunit bridge (bridge B4) with the 23S rRNA of the 50S subunit in the ribosome. The polypeptide is Small ribosomal subunit protein uS15 (Wolbachia sp. subsp. Brugia malayi (strain TRS)).